Here is a 209-residue protein sequence, read N- to C-terminus: Ribosomal RNA large subunit methyltransferase E (209 aa).

S-adenosyl-L-methionine-binding residues include Gly-63, Trp-65, Asp-83, Asp-99, and Asp-124. Lys-164 serves as the catalytic Proton acceptor.

It belongs to the class I-like SAM-binding methyltransferase superfamily. RNA methyltransferase RlmE family.

Its subcellular location is the cytoplasm. It catalyses the reaction uridine(2552) in 23S rRNA + S-adenosyl-L-methionine = 2'-O-methyluridine(2552) in 23S rRNA + S-adenosyl-L-homocysteine + H(+). In terms of biological role, specifically methylates the uridine in position 2552 of 23S rRNA at the 2'-O position of the ribose in the fully assembled 50S ribosomal subunit. The polypeptide is Ribosomal RNA large subunit methyltransferase E (Yersinia enterocolitica serotype O:8 / biotype 1B (strain NCTC 13174 / 8081)).